The primary structure comprises 591 residues: Paxillin (591 aa).

An N-acetylmethionine modification is found at M1. The LD motif 1 motif lies at 3 to 15 (DLDALLADLESTT). The interval 17–138 (HISKRPVFLS…SSPTVMSTSL (122 aa)) is disordered. Phosphotyrosine; by PTK6 is present on Y31. The span at 45–54 (VPPPVPPPPS) shows a compositional bias: pro residues. The span at 69–101 (WQPSGSRFIHQQPQSSSPVYGSSAKTSSVSNPQ) shows a compositional bias: polar residues. Residues S83 and S85 each carry the phosphoserine modification. Y88 is modified (phosphotyrosine). Residue S106 is modified to Phosphoserine. The residue at position 118 (Y118) is a Phosphotyrosine; by PTK6. S119, S126, and S130 each carry phosphoserine. The span at 121–137 (PNKQKSAESSPTVMSTS) shows a compositional bias: polar residues. T132 is modified (phosphothreonine). A phosphoserine mark is found at S137, S140, and S143. The LD motif 2 signature appears at 144-156 (ELDRLLLELNAVQ). Residues 156-213 (QHNPPGFPADEANSGPPLPGALSPHYGVPETNSPLGGKAGPLTKEKPKRNGGRGLEDV) form a disordered region. Y181 is subject to Phosphotyrosine. Positions 216-228 (SVESLLDELESSV) match the LD motif 3 motif. The residue at position 230 (S230) is a Phosphoserine. Residues 237-260 (VNQGEMSSPQRVTSTQQQTRISAS) form a disordered region. A Phosphoserine; by CDK5 modification is found at S244. 4 positions are modified to phosphoserine: S250, S258, S261, and S272. The short motif at 265–276 (ELDELMASLSDF) is the LD motif 4 element. Positions 289–300 (RCWAADWPRDGG) are enriched in basic and acidic residues. Positions 289–335 (RCWAADWPRDGGRSSPGGQDEGGFMAQGKTGSSSPPGGPPKPGSQLD) are disordered. S303, S322, S332, and S340 each carry phosphoserine. The LD motif 5 motif lies at 333 to 345 (QLDSMLGSLQSDL). 4 consecutive LIM zinc-binding domains span residues 356–415 (GVCG…LFSP), 416–473 (RCYY…DMFA), 474–533 (PKCG…RRGS), and 534–591 (LCSG…KLFC). The residue at position 533 (S533) is a Phosphoserine.

The protein belongs to the paxillin family. Binds to vinculin and to the SH3 domain of SRC. Interacts with GIT1, NUDT16L1/SDOS, PARVA, PARVB, SORBS1 and TGFB1I1. Component of cytoplasmic complexes, which also contain GIT1, ARHGEF6 and PAK1. Binds ASAP2. Interacts with RNF5 and PDCD10. Interacts with NEK3 and this interaction is prolactin-dependent. Interacts with PTK2/FAK1 and PTK2B/PYK2. Interacts with PTK6. Interacts with CD36. Interacts (via cytoplasmic domain) with CEACAM1; the interaction is phosphotyrosyl-dependent. Interacts with PXN; this complex stabilizes actin dynamics. Interacts with TRIM15. Interacts with PAK4; PAK4 acts as a scaffold to suppport PAXI phosphorylation at Ser-272. In terms of processing, phosphorylated by MAPK1/ERK2. Phosphorylated on tyrosine residues during integrin-mediated cell adhesion, embryonic development, fibroblast transformation and following stimulation of cells by mitogens. Phosphorylation at Ser-244 by CDK5 reduces its interaction with PTK2/FAK1 in matrix-cell focal adhesions (MCFA) during oligodendrocytes (OLs) differentiation. Phosphorylation at Tyr-31 and Tyr-118 by PTK6 promote the activation of RAC1 via CRK/CrKII, thereby promoting migration and invasion. Phosphorylation at Ser-250 by SLK is required for PXN redistribution and cell motility. Phosphorylation at Ser-272 promotes focal adhesion disassembly during cell migration.

It is found in the cytoplasm. It localises to the cytoskeleton. The protein localises to the cell junction. The protein resides in the focal adhesion. Its subcellular location is the cell cortex. Its function is as follows. Cytoskeletal protein involved in actin-membrane attachment at sites of cell adhesion to the extracellular matrix (focal adhesion). Recruits other proteins such as TRIM15 to focal adhesion. The polypeptide is Paxillin (PXN) (Pongo abelii (Sumatran orangutan)).